The chain runs to 168 residues: Small ribosomal subunit protein bS16 (168 aa).

A disordered region spans residues 110-168; that stretch reads LAEAEGGPSNEATQPKKKKAPAKKAASDIEATADPAGNADKSEPAAEGEDATVAGATEG.

Belongs to the bacterial ribosomal protein bS16 family.

This is Small ribosomal subunit protein bS16 from Mycobacterium sp. (strain JLS).